The following is a 241-amino-acid chain: Aquaporin Z 1 (241 aa).

The chain crosses the membrane as a helical span at residues 23 to 43; that stretch reads AVFAAAFPELGIGFLGVAFAF. The NPA 1 signature appears at 63 to 65; that stretch reads NPA. 3 helical membrane passes run 85–105, 129–149, and 156–176; these read IVAQVLGAVVAAAALYVILTG, LLSALLIEIILTAFFLVVILG, and PVGFAPVAIGLALTLIHLISI. Residues 184-186 carry the NPA 2 motif; it reads NPA. Residues 204 to 224 traverse the membrane as a helical segment; sequence WLFWLAPILGGAIGAVVWKIF.

This sequence belongs to the MIP/aquaporin (TC 1.A.8) family. As to quaternary structure, homotetramer.

It is found in the cell inner membrane. It catalyses the reaction H2O(in) = H2O(out). Its function is as follows. Channel that permits osmotically driven movement of water in both directions. It is involved in the osmoregulation and in the maintenance of cell turgor during volume expansion in rapidly growing cells. It mediates rapid entry or exit of water in response to abrupt changes in osmolarity. The protein is Aquaporin Z 1 of Agrobacterium fabrum (strain C58 / ATCC 33970) (Agrobacterium tumefaciens (strain C58)).